Reading from the N-terminus, the 340-residue chain is Dihydroorotate dehydrogenase (quinone) (340 aa).

Residues 62–66 (AGMDK) and Thr86 each bind FMN. Residue Lys66 coordinates substrate. 111–115 (NRMGF) is a substrate binding site. The FMN site is built by Asn139 and Asn172. Asn172 serves as a coordination point for substrate. Ser175 functions as the Nucleophile in the catalytic mechanism. Asn177 contacts substrate. FMN-binding residues include Lys217 and Thr245. Substrate is bound at residue 246–247 (NT). FMN is bound by residues Gly268, Gly297, and 318–319 (YS).

It belongs to the dihydroorotate dehydrogenase family. Type 2 subfamily. Monomer. FMN serves as cofactor.

It is found in the cell membrane. It carries out the reaction (S)-dihydroorotate + a quinone = orotate + a quinol. It functions in the pathway pyrimidine metabolism; UMP biosynthesis via de novo pathway; orotate from (S)-dihydroorotate (quinone route): step 1/1. Functionally, catalyzes the conversion of dihydroorotate to orotate with quinone as electron acceptor. This chain is Dihydroorotate dehydrogenase (quinone), found in Shewanella woodyi (strain ATCC 51908 / MS32).